The following is a 439-amino-acid chain: Ribosomal protein uS12 methylthiotransferase RimO (439 aa).

The region spanning lysine 3–glycine 115 is the MTTase N-terminal domain. 6 residues coordinate [4Fe-4S] cluster: cysteine 12, cysteine 46, cysteine 78, cysteine 147, cysteine 151, and cysteine 154. In terms of domain architecture, Radical SAM core spans threonine 133 to alanine 362.

This sequence belongs to the methylthiotransferase family. RimO subfamily. It depends on [4Fe-4S] cluster as a cofactor.

The protein resides in the cytoplasm. It carries out the reaction L-aspartate(89)-[ribosomal protein uS12]-hydrogen + (sulfur carrier)-SH + AH2 + 2 S-adenosyl-L-methionine = 3-methylsulfanyl-L-aspartate(89)-[ribosomal protein uS12]-hydrogen + (sulfur carrier)-H + 5'-deoxyadenosine + L-methionine + A + S-adenosyl-L-homocysteine + 2 H(+). In terms of biological role, catalyzes the methylthiolation of an aspartic acid residue of ribosomal protein uS12. The sequence is that of Ribosomal protein uS12 methylthiotransferase RimO from Wolinella succinogenes (strain ATCC 29543 / DSM 1740 / CCUG 13145 / JCM 31913 / LMG 7466 / NCTC 11488 / FDC 602W) (Vibrio succinogenes).